Reading from the N-terminus, the 210-residue chain is 2-hydroxy-3-keto-5-methylthiopentenyl-1-phosphate phosphatase (210 aa).

The protein belongs to the HAD-like hydrolase superfamily. MtnX family.

The enzyme catalyses 2-hydroxy-5-methylsulfanyl-3-oxopent-1-enyl phosphate + H2O = 1,2-dihydroxy-5-(methylsulfanyl)pent-1-en-3-one + phosphate. It participates in amino-acid biosynthesis; L-methionine biosynthesis via salvage pathway; L-methionine from S-methyl-5-thio-alpha-D-ribose 1-phosphate: step 4/6. Dephosphorylates 2-hydroxy-3-keto-5-methylthiopentenyl-1-phosphate (HK-MTPenyl-1-P) yielding 1,2-dihydroxy-3-keto-5-methylthiopentene (DHK-MTPene). The chain is 2-hydroxy-3-keto-5-methylthiopentenyl-1-phosphate phosphatase from Microcystis aeruginosa (strain NIES-843 / IAM M-2473).